A 254-amino-acid polypeptide reads, in one-letter code: Metalloprotease YcaL (254 aa).

The signal sequence occupies residues 1-19 (MKNTKLLLAIATSAALLTG). Cys-20 is lipidated: N-palmitoyl cysteine. Cys-20 carries S-diacylglycerol cysteine lipidation. A Zn(2+)-binding site is contributed by His-134. Residue Glu-135 is part of the active site. His-138 and Glu-193 together coordinate Zn(2+). Positions 227–254 (GRTQSMFDSHPPSTERAQHIRDRIASGK) are disordered. Basic and acidic residues predominate over residues 242–254 (RAQHIRDRIASGK).

Belongs to the peptidase M48B family. It depends on Zn(2+) as a cofactor.

Its subcellular location is the cell inner membrane. Its function is as follows. Involved in the degradation of the LPS-assembly protein LptD. Degrades LptD that have engaged the Bam complex but are stalled at an early step in the outer membrane protein assembly process. The polypeptide is Metalloprotease YcaL (ycaL) (Escherichia coli (strain K12)).